Consider the following 121-residue polypeptide: Large ribosomal subunit protein bL20 (121 aa).

The protein belongs to the bacterial ribosomal protein bL20 family.

Its function is as follows. Binds directly to 23S ribosomal RNA and is necessary for the in vitro assembly process of the 50S ribosomal subunit. It is not involved in the protein synthesizing functions of that subunit. The sequence is that of Large ribosomal subunit protein bL20 from Polynucleobacter necessarius subsp. necessarius (strain STIR1).